The sequence spans 157 residues: C-type lectin 9a (157 aa).

Positions 1-23 (MGRFIFVSFGLLVVFLSLSGTGA) are cleaved as a signal peptide. Disulfide bonds link C27–C38, C55–C151, and C126–C143. A C-type lectin domain is found at 34–152 (YDQYCYKPFN…CQAKKPFVCK (119 aa)).

The protein belongs to the snaclec family. In terms of assembly, heteromultimer; disulfide-linked. Expressed by the venom gland.

It is found in the secreted. Its function is as follows. Interferes with one step of hemostasis (modulation of platelet aggregation, or coagulation cascade, for example). This chain is C-type lectin 9a, found in Crotalus adamanteus (Eastern diamondback rattlesnake).